A 249-amino-acid chain; its full sequence is 23S rRNA (guanosine-2'-O-)-methyltransferase RlmB (249 aa).

3 residues coordinate S-adenosyl-L-methionine: glycine 200, isoleucine 220, and leucine 229.

It belongs to the class IV-like SAM-binding methyltransferase superfamily. RNA methyltransferase TrmH family. RlmB subfamily.

The protein resides in the cytoplasm. It carries out the reaction guanosine(2251) in 23S rRNA + S-adenosyl-L-methionine = 2'-O-methylguanosine(2251) in 23S rRNA + S-adenosyl-L-homocysteine + H(+). Its function is as follows. Specifically methylates the ribose of guanosine 2251 in 23S rRNA. This Xylella fastidiosa (strain Temecula1 / ATCC 700964) protein is 23S rRNA (guanosine-2'-O-)-methyltransferase RlmB.